A 487-amino-acid polypeptide reads, in one-letter code: Phenylalanine--tRNA ligase alpha subunit (487 aa).

Residues Thr-319, 361 to 363 (QVE), and Tyr-401 contribute to the L-phenylalanine site. Position 403 (Glu-403) interacts with Mg(2+). Phe-427 is an L-phenylalanine binding site.

This sequence belongs to the class-II aminoacyl-tRNA synthetase family. Phe-tRNA synthetase alpha subunit type 2 subfamily. In terms of assembly, tetramer of two alpha and two beta subunits. Requires Mg(2+) as cofactor.

Its subcellular location is the cytoplasm. It carries out the reaction tRNA(Phe) + L-phenylalanine + ATP = L-phenylalanyl-tRNA(Phe) + AMP + diphosphate + H(+). This chain is Phenylalanine--tRNA ligase alpha subunit (phesA), found in Dictyostelium discoideum (Social amoeba).